The chain runs to 91 residues: Probable Fe(2+)-trafficking protein (91 aa).

It belongs to the Fe(2+)-trafficking protein family.

Could be a mediator in iron transactions between iron acquisition and iron-requiring processes, such as synthesis and/or repair of Fe-S clusters in biosynthetic enzymes. This chain is Probable Fe(2+)-trafficking protein, found in Actinobacillus pleuropneumoniae serotype 5b (strain L20).